Consider the following 137-residue polypeptide: uncharacterized protein (137 aa).

This is an uncharacterized protein from Mycoplasma genitalium (strain ATCC 33530 / DSM 19775 / NCTC 10195 / G37) (Mycoplasmoides genitalium).